Here is a 264-residue protein sequence, read N- to C-terminus: Thymidylate synthase (264 aa).

R21 provides a ligand contact to dUMP. Residue H51 coordinates (6R)-5,10-methylene-5,6,7,8-tetrahydrofolate. DUMP is bound at residue 126 to 127 (RR). C146 acts as the Nucleophile in catalysis. DUMP is bound by residues 166–169 (RSCD), N177, and 207–209 (HLY). D169 lines the (6R)-5,10-methylene-5,6,7,8-tetrahydrofolate pocket. A263 is a binding site for (6R)-5,10-methylene-5,6,7,8-tetrahydrofolate.

Belongs to the thymidylate synthase family. Bacterial-type ThyA subfamily. In terms of assembly, homodimer.

Its subcellular location is the cytoplasm. The enzyme catalyses dUMP + (6R)-5,10-methylene-5,6,7,8-tetrahydrofolate = 7,8-dihydrofolate + dTMP. Its pathway is pyrimidine metabolism; dTTP biosynthesis. Catalyzes the reductive methylation of 2'-deoxyuridine-5'-monophosphate (dUMP) to 2'-deoxythymidine-5'-monophosphate (dTMP) while utilizing 5,10-methylenetetrahydrofolate (mTHF) as the methyl donor and reductant in the reaction, yielding dihydrofolate (DHF) as a by-product. This enzymatic reaction provides an intracellular de novo source of dTMP, an essential precursor for DNA biosynthesis. The chain is Thymidylate synthase from Citrobacter koseri (strain ATCC BAA-895 / CDC 4225-83 / SGSC4696).